The primary structure comprises 141 residues: Lutropin subunit beta (141 aa).

Positions 1-20 (MEMLQGLLLWLLLSVGGVWA) are cleaved as a signal peptide. 6 disulfide bridges follow: cysteine 29/cysteine 77, cysteine 43/cysteine 92, cysteine 46/cysteine 130, cysteine 54/cysteine 108, cysteine 58/cysteine 110, and cysteine 113/cysteine 120. An N-linked (GlcNAc...) asparagine glycan is attached at asparagine 33.

Belongs to the glycoprotein hormones subunit beta family. As to quaternary structure, heterodimer of a common alpha chain and a unique beta chain which confers biological specificity to thyrotropin, lutropin, follitropin and gonadotropin.

The protein resides in the secreted. Promotes spermatogenesis and ovulation by stimulating the testes and ovaries to synthesize steroids. The sequence is that of Lutropin subunit beta (LHB1) from Ceratotherium simum (White rhinoceros).